Here is a 104-residue protein sequence, read N- to C-terminus: Small ribosomal subunit protein uS10 (104 aa).

This sequence belongs to the universal ribosomal protein uS10 family. As to quaternary structure, part of the 30S ribosomal subunit.

In terms of biological role, involved in the binding of tRNA to the ribosomes. In Albidiferax ferrireducens (strain ATCC BAA-621 / DSM 15236 / T118) (Rhodoferax ferrireducens), this protein is Small ribosomal subunit protein uS10.